The sequence spans 181 residues: Translation initiation factor IF-3, chloroplastic (181 aa).

Belongs to the IF-3 family. In terms of assembly, monomer.

The protein resides in the plastid. It is found in the chloroplast. Functionally, IF-3 binds to the 30S ribosomal subunit and shifts the equilibrium between 70S ribosomes and their 50S and 30S subunits in favor of the free subunits, thus enhancing the availability of 30S subunits on which protein synthesis initiation begins. The protein is Translation initiation factor IF-3, chloroplastic of Galdieria sulphuraria (Red alga).